The following is a 670-amino-acid chain: Probable Rho-GTPase-activating protein 9 (670 aa).

An F-BAR domain is found at 3–392; that stretch reads DGFSNSFWSR…SFKNLDSLRD (390 aa). A disordered region spans residues 141 to 161; that stretch reads NSKKSNLTDRKPIPTSRKSNK. The region spanning 425 to 622 is the Rho-GAP domain; that stretch reads SSLTEDNLIV…DLINEFENLF (198 aa). Phosphothreonine is present on threonine 640. Over residues 641 to 663 the composition is skewed to polar residues; that stretch reads PITTSPQKLKLPRSSSPCKNPSP. The disordered stretch occupies residues 641 to 670; the sequence is PITTSPQKLKLPRSSSPCKNPSPTRRFRPF. Serine 645 carries the post-translational modification Phosphoserine.

The protein resides in the cytoplasm. This chain is Probable Rho-GTPase-activating protein 9 (rga9), found in Schizosaccharomyces pombe (strain 972 / ATCC 24843) (Fission yeast).